Here is a 284-residue protein sequence, read N- to C-terminus: MTAKLIDGKTIAANIRQQISGRVAERRAQGLRAPGLAVILVGSDPASQVYVAHKRKDCEEVGFNSVAHDLPSDTRQEDLLALIDQLNDDASIDGILVQLPLPKHLDASQLFERIRPDKDVDGFHPYNVGRLAQRMPLLRPCTPKGIMTLLESTGVDLHGLDAVVVGASNIVGRPMALELLLAGCTTTVTHRFTRNLAEHVRRADLVVVATGITGLVKGEWIKPGAIVIDVGINRQTDGRLLGDVEFEPASERAAWITPVPGGVGPMTRACLLENTLYAAEHLHD.

Residues glycine 166 to serine 168 and isoleucine 232 each bind NADP(+).

The protein belongs to the tetrahydrofolate dehydrogenase/cyclohydrolase family. As to quaternary structure, homodimer.

It catalyses the reaction (6R)-5,10-methylene-5,6,7,8-tetrahydrofolate + NADP(+) = (6R)-5,10-methenyltetrahydrofolate + NADPH. The enzyme catalyses (6R)-5,10-methenyltetrahydrofolate + H2O = (6R)-10-formyltetrahydrofolate + H(+). The protein operates within one-carbon metabolism; tetrahydrofolate interconversion. Functionally, catalyzes the oxidation of 5,10-methylenetetrahydrofolate to 5,10-methenyltetrahydrofolate and then the hydrolysis of 5,10-methenyltetrahydrofolate to 10-formyltetrahydrofolate. The protein is Bifunctional protein FolD of Stutzerimonas stutzeri (strain A1501) (Pseudomonas stutzeri).